Consider the following 348-residue polypeptide: Phosphate acyltransferase (348 aa).

It belongs to the PlsX family. In terms of assembly, homodimer. Probably interacts with PlsY.

The protein localises to the cytoplasm. It catalyses the reaction a fatty acyl-[ACP] + phosphate = an acyl phosphate + holo-[ACP]. It participates in lipid metabolism; phospholipid metabolism. Its function is as follows. Catalyzes the reversible formation of acyl-phosphate (acyl-PO(4)) from acyl-[acyl-carrier-protein] (acyl-ACP). This enzyme utilizes acyl-ACP as fatty acyl donor, but not acyl-CoA. The sequence is that of Phosphate acyltransferase from Neisseria gonorrhoeae (strain ATCC 700825 / FA 1090).